We begin with the raw amino-acid sequence, 338 residues long: Probable arabinan endo-1,5-alpha-L-arabinosidase A (338 aa).

The signal sequence occupies residues 1-20 (MRASFVVTAPLLAAAVHGYA). The active-site Proton acceptor is Asp33. Residue Glu217 is the Proton donor of the active site.

The protein belongs to the glycosyl hydrolase 43 family.

Its subcellular location is the secreted. The enzyme catalyses Endohydrolysis of (1-&gt;5)-alpha-arabinofuranosidic linkages in (1-&gt;5)-arabinans.. The protein operates within glycan metabolism; L-arabinan degradation. Its function is as follows. Endo-1,5-alpha-L-arabinanase involved in degradation of pectin. Its preferred substrate is linear 1,5-alpha-L-arabinan. This Aspergillus terreus (strain NIH 2624 / FGSC A1156) protein is Probable arabinan endo-1,5-alpha-L-arabinosidase A (abnA).